The primary structure comprises 390 residues: Centrosomal protein of 44 kDa (390 aa).

Positions 11 to 195 (RNLEQVLRLL…ISEDTLSPIT (185 aa)) are binds with microtubules and centrioles. A coiled-coil region spans residues 233 to 269 (EITALQTMLAECQENLKKLTSIEKRLDCLEQKMKGKV). Residues 322–348 (RKSEVERPASIPLSSGYSTASSDSTPR) are disordered. 2 positions are modified to phosphoserine: Ser331 and Ser345. The segment covering 335-345 (SSGYSTASSDS) has biased composition (low complexity). Thr346 is subject to Phosphothreonine. Residues 361–385 (SEETTIQKMERMKKMFEETAELLKC) adopt a coiled-coil conformation.

Interacts with CROCC. Interacts with POC1B; the interaction is direct and recruits POC1B to centriolar microtubules. Binds to centriolar microtubules.

It localises to the cytoplasm. Its subcellular location is the cytoskeleton. The protein resides in the microtubule organizing center. It is found in the centrosome. The protein localises to the centriole. It localises to the spindle pole. Its subcellular location is the midbody. Centriole-enriched microtubule-binding protein involved in centriole biogenesis. In collaboration with CEP295 and POC1B, is required for the centriole-to-centrosome conversion by ensuring the formation of bona fide centriole wall. Functions as a linker component that maintains centrosome cohesion. Associates with CROCC and regulates its stability and localization to the centrosome. The sequence is that of Centrosomal protein of 44 kDa (CEP44) from Homo sapiens (Human).